Reading from the N-terminus, the 343-residue chain is Serine/threonine-protein kinase SRK2C (343 aa).

The Protein kinase domain occupies 4-260 (YEIVKDIGSG…IEEIKNHSWF (257 aa)). Residues 10–18 (IGSGNFGVA) and Lys-33 contribute to the ATP site. Asp-123 serves as the catalytic Proton acceptor. Residue Thr-158 is modified to Phosphothreonine.

The protein belongs to the protein kinase superfamily. Ser/Thr protein kinase family. Interacts with I-2 and TOPP1. Expressed in seedlings.

The catalysed reaction is L-seryl-[protein] + ATP = O-phospho-L-seryl-[protein] + ADP + H(+). The enzyme catalyses L-threonyl-[protein] + ATP = O-phospho-L-threonyl-[protein] + ADP + H(+). In terms of biological role, involved in gene regulation and confers tolerance to drought and osmotic stress. The protein is Serine/threonine-protein kinase SRK2C (SRK2C) of Arabidopsis thaliana (Mouse-ear cress).